We begin with the raw amino-acid sequence, 267 residues long: Short-chain dehydrogenase/reductase GME11361 (267 aa).

I10, T36, K42, D57, N80, Y129, K133, V162, and S164 together coordinate NADP(+). Y129 (proton acceptor) is an active-site residue. K133 (lowers pKa of active site Tyr) is an active-site residue.

Belongs to the short-chain dehydrogenases/reductases (SDR) family.

It functions in the pathway secondary metabolite biosynthesis. Its function is as follows. Short-chain dehydrogenase/reductase; part of the gene cluster that mediates the biosynthesis of dibenzodioxocinones such as pestalotiollide B, a novel class of inhibitors against cholesterol ester transfer protein (CEPT). The biosynthesis initiates from condensation of acetate and malonate units catalyzed by the non-reducing PKS pks8/GME11356. Pks8/GME11356 lacks a thioesterase (TE) domain, which is important to the cyclizing of the third ring of atrochrysone carboxylic acid, and the esterase GME11355 might play the role of TE and catalyzes the cyclization reaction of the C ring. The lactamase-like protein GME11357 (or other beta-lactamases in Pestalotiopsis microspora) probably hydrolyzes the thioester bond between the ACP of pks8/GME11356 and the intermediate to release atrochrysone carboxylic acid, which is spontaneously dehydrates to form endocrocin anthrone. Endocrocin anthrone is further converted to emodin via the endocrocin intermediate. Emodin is then oxidized by several enzymes such as the Baeyer-Villiger oxidase GME11358, the oxidoreductase GME11367, the short chain dehydrogenase/reductase GME11373, as well as by other oxidoreductases from the cluster, to modify the A and C rings and open the B ring, and finally yield monodictyphenone. The prenyltransferase GME11375 may catalyze the addition reaction between the C5 side chains and the carbon bone of dibenzodioxocinones. The remaining biochemical reactions to the final product dibenzodioxocinones should be methylation catalyzed by methyltransferase GME11366 and reduction and lactonization reaction catalyzed by a series of oxidordeuctases. In Pestalotiopsis microspora, this protein is Short-chain dehydrogenase/reductase GME11361.